Consider the following 477-residue polypeptide: S-triazine hydrolase (477 aa).

Composition is skewed to low complexity over residues 38–73 (SPTT…KSSS) and 120–132 (PLSS…DPTT). 2 disordered regions span residues 38–77 (SPTT…GVVH) and 120–143 (PLSS…GSPF).

This sequence belongs to the metallo-dependent hydrolases superfamily. ATZ/TRZ family.

The protein operates within xenobiotic degradation; melamine degradation. In terms of biological role, hydrolytic deamination of the S-triazine substrate melamine. The chain is S-triazine hydrolase (trzA) from Gordonia rubripertincta (Rhodococcus corallinus).